The primary structure comprises 427 residues: Glutamate-1-semialdehyde 2,1-aminomutase (427 aa).

N6-(pyridoxal phosphate)lysine is present on Lys-265.

It belongs to the class-III pyridoxal-phosphate-dependent aminotransferase family. HemL subfamily. In terms of assembly, homodimer. Pyridoxal 5'-phosphate serves as cofactor.

The protein resides in the cytoplasm. The enzyme catalyses (S)-4-amino-5-oxopentanoate = 5-aminolevulinate. Its pathway is porphyrin-containing compound metabolism; protoporphyrin-IX biosynthesis; 5-aminolevulinate from L-glutamyl-tRNA(Glu): step 2/2. This Burkholderia ambifaria (strain ATCC BAA-244 / DSM 16087 / CCUG 44356 / LMG 19182 / AMMD) (Burkholderia cepacia (strain AMMD)) protein is Glutamate-1-semialdehyde 2,1-aminomutase.